We begin with the raw amino-acid sequence, 284 residues long: Interferon antagonist OPG040 (284 aa).

ANK repeat units follow at residues 29–58 (HGHS…LKNL), 60–89 (ENEF…DDSQ), 93–122 (KGNT…RLMF), 127–157 (GWKT…TFDL), 159–188 (ILLS…STNT), and 193–222 (LFIP…NIYS).

The protein belongs to the orthopoxvirus OPG039 family.

The protein localises to the host cytoplasm. It localises to the host nucleus. Inhibits antiviral activity induced by type I interferons. Does not block signal transduction of IFN, but is important to counter the host antiviral state induced by a pre-treatment with IFN. Plays a role in the inhibition of host NF-kappa-B activation by preventing the acetylation of the RELA/p65 subunit of NF-kappaB. The protein is Interferon antagonist OPG040 (OPG039) of Bos taurus (Bovine).